The following is a 213-amino-acid chain: MTRVKICGTTTPEDALACAVSGADAIGMLVDVRISPRCITADQARLITSVLPPFVASVIVMQPSTPGEVVDAVRKIRPTAVQLHGSEPPDFLKHIKLQVPGVRLIKTIHVGEGGEIEKARQYEGVADAILLDTASARGGGMGITHDWNVSREIIGSVRLPVILAGGLSPKNVAEAIEAARPYAVDVCSGVEAEKRKKDLRLVREFIEQVRVTK.

It belongs to the TrpF family.

It catalyses the reaction N-(5-phospho-beta-D-ribosyl)anthranilate = 1-(2-carboxyphenylamino)-1-deoxy-D-ribulose 5-phosphate. It functions in the pathway amino-acid biosynthesis; L-tryptophan biosynthesis; L-tryptophan from chorismate: step 3/5. This chain is N-(5'-phosphoribosyl)anthranilate isomerase, found in Methanocella arvoryzae (strain DSM 22066 / NBRC 105507 / MRE50).